Here is a 446-residue protein sequence, read N- to C-terminus: Zinc finger protein 19 (446 aa).

In terms of domain architecture, KRAB spans 2–73 (VTFEDVAVHF…EAQDDPPAET (72 aa)). 9 C2H2-type zinc fingers span residues 149–171 (FICEECGKSFSYFSYYARHQRIH), 177–199 (FECSECGKAFNGNSSLIRHQRIH), 205–227 (YQCEECGRAFNDNANLIRHQRIH), 233–255 (YYCTECGNSFTSSSEFVIHQRIH), 261–283 (YECNECGKAFVGNSPLLRHQKIH), 289–311 (YECNECGKSFGRTSHLSQHQRIH), 317–339 (YSCKVCGQAFNFHTKLTRHQRIH), 345–367 (FDCVDCGKAFSAQEQLKRHLRIH), and 373–395 (YVCDECGKAFTSKRNLHQHQRIH). A C2H2-type 10; degenerate zinc finger spans residues 401–423 (YEYSKYEKAFGTSSQLGHLEHVH).

It belongs to the krueppel C2H2-type zinc-finger protein family.

It localises to the nucleus. In terms of biological role, may be involved in transcriptional regulation. The protein is Zinc finger protein 19 (ZNF19) of Pongo abelii (Sumatran orangutan).